A 325-amino-acid polypeptide reads, in one-letter code: Aerobic respiration control sensor protein ArcB homolog (325 aa).

The Cytoplasmic portion of the chain corresponds to 1 to 26 (MKNFKYFAQSYVDWVIRLGRLRFSLL). The helical transmembrane segment at 27-47 (GVMILAVLALCTQILFSLFIV) threads the bilayer. The Periplasmic portion of the chain corresponds to 48 to 57 (HQISWVDIFR). Residues 58 to 78 (SVTFGLLTAPFVIYFFTLLVE) traverse the membrane as a helical segment. Residues 79–325 (KLEHSRLDLS…AQLMGRGFNS (247 aa)) lie on the Cytoplasmic side of the membrane. Residues 128–325 (TISHEFRTPL…AQLMGRGFNS (198 aa)) form the Histidine kinase domain. At His131 the chain carries Phosphohistidine; by autocatalysis.

It is found in the cell inner membrane. The enzyme catalyses ATP + protein L-histidine = ADP + protein N-phospho-L-histidine.. Member of the two-component regulatory system ArcB/ArcA. Activates ArcA by phosphorylation. This Haemophilus influenzae (strain ATCC 51907 / DSM 11121 / KW20 / Rd) protein is Aerobic respiration control sensor protein ArcB homolog (arcB).